Consider the following 323-residue polypeptide: tRNA dimethylallyltransferase (323 aa).

12-19 (GPTASGKT) lines the ATP pocket. Position 14–19 (14–19 (TASGKT)) interacts with substrate. 2 interaction with substrate tRNA regions span residues 37-40 (DSAL) and 161-165 (QRLVR).

The protein belongs to the IPP transferase family. As to quaternary structure, monomer. The cofactor is Mg(2+).

The enzyme catalyses adenosine(37) in tRNA + dimethylallyl diphosphate = N(6)-dimethylallyladenosine(37) in tRNA + diphosphate. In terms of biological role, catalyzes the transfer of a dimethylallyl group onto the adenine at position 37 in tRNAs that read codons beginning with uridine, leading to the formation of N6-(dimethylallyl)adenosine (i(6)A). This is tRNA dimethylallyltransferase from Stutzerimonas stutzeri (strain A1501) (Pseudomonas stutzeri).